The primary structure comprises 592 residues: Sodium- and chloride-dependent transporter XTRP3A (592 aa).

The Cytoplasmic portion of the chain corresponds to 1 to 7 (MEKARPQ). A helical membrane pass occupies residues 8 to 28 (WGHPLQFVFACISYAVGLGNV). Residues 29–42 (WRFPYLCQMYGGGS) lie on the Extracellular side of the membrane. A helical membrane pass occupies residues 43 to 63 (FLVPYIIMLIVEGMPLLYLEL). At 64-79 (AVGQRMRQGSIGAWRT) the chain is on the cytoplasmic side. The chain crosses the membrane as a helical span at residues 80 to 100 (ISPYLSGVGVASVVVSFFLSM). Topologically, residues 101–165 (YYNVINAWGF…ISPSIQENGG (65 aa)) are extracellular. The N-linked (GlcNAc...) asparagine glycan is linked to Asn-131. A helical transmembrane segment spans residues 166 to 186 (VQWEPALCLTLAWLMVYLCIL). Topologically, residues 187–194 (RGTESTGK) are cytoplasmic. A helical membrane pass occupies residues 195-215 (VVYFTASMPYCVLIIYLVRGL). Topologically, residues 216–241 (TLHGATNGLMYMFTPKMEQLANPKAW) are extracellular. Residues 242–262 (INAATQIFFSLGLGFGSLIAF) traverse the membrane as a helical segment. Over 263-276 (ASYNEPSNNCQKHA) the chain is Cytoplasmic. Residues 277–297 (IIVSIINSSTSIFASIVTFSI) traverse the membrane as a helical segment. Residues 298–389 (YGFKATFNYE…EAIKNMEVSQ (92 aa)) lie on the Extracellular side of the membrane. A helical transmembrane segment spans residues 390–410 (LWSVLYFFMLLMLGIGSMLGN). Over 411–431 (TAAILTPLTDSKVISSYLPKE) the chain is Cytoplasmic. A helical membrane pass occupies residues 432–452 (AISGLVCLINCAVGMVFTMEA). The Extracellular portion of the chain corresponds to 453–465 (GNYWFDIFNDYAA). The chain crosses the membrane as a helical span at residues 466–486 (TLSLLLIVLVETIAVCYVYGL). Over 487-504 (KRFESDLRAMTGRTLSWY) the chain is Cytoplasmic. A helical transmembrane segment spans residues 505–525 (WKVMWAFVSPLLIVGLFIFYL). At 526 to 554 (SDYILTGTLQYQAWDATQGQLVTKDYPPH) the chain is on the extracellular side. Residues 555 to 575 (ALAVIGLLVASSTMCIPLVAL) form a helical membrane-spanning segment. Over 576–592 (GTFIRNRLKRGGSAPVA) the chain is Cytoplasmic.

It belongs to the sodium:neurotransmitter symporter (SNF) (TC 2.A.22) family. SLC6A20 subfamily. As to expression, expressed in brain, kidney, small intestine, thymus, spleen and lung. In the brain, expressed in cerebellum, cortex and brain stem. Not detected in liver, muscle or heart. In brain, widespread in various regions, including the meninges, choroid plexus, cortex, hippocampus and thalamus.

Its subcellular location is the apical cell membrane. The catalysed reaction is L-proline(out) + chloride(out) + 2 Na(+)(out) = L-proline(in) + chloride(in) + 2 Na(+)(in). The enzyme catalyses 4-hydroxy-L-proline(out) + chloride(out) + 2 Na(+)(out) = 4-hydroxy-L-proline(in) + chloride(in) + 2 Na(+)(in). It catalyses the reaction 2-methyl-2-(methylamino)propanoate(out) + chloride(out) + 2 Na(+)(out) = 2-methyl-2-(methylamino)propanoate(in) + chloride(in) + 2 Na(+)(in). It carries out the reaction L-pipecolate(out) + chloride(out) + 2 Na(+)(out) = L-pipecolate(in) + chloride(in) + 2 Na(+)(in). The catalysed reaction is glycine betaine(out) + chloride(out) + 2 Na(+)(out) = glycine betaine(in) + chloride(in) + 2 Na(+)(in). The enzyme catalyses glycine(out) + chloride(out) + 2 Na(+)(out) = glycine(in) + chloride(in) + 2 Na(+)(in). Mediates the Na(+)- and Cl(-)-dependent uptake of imino acids such as L-proline, N-methyl-L-proline and pipecolate as well as N-methylated amino acids. Also transports glycine, regulates proline and glycine homeostasis in the brain playing a role in the modulation of NMDAR currents. The polypeptide is Sodium- and chloride-dependent transporter XTRP3A (Mus musculus (Mouse)).